Consider the following 869-residue polypeptide: Iron-sulfur cluster assembly SufBD family protein ML0593 (869 aa).

A DOD-type homing endonuclease domain is found at 344–477 (LLGLWLGDGH…VRQLAIGCGL (134 aa)).

This sequence belongs to the iron-sulfur cluster assembly SufBD family. This protein undergoes a protein self splicing that involves a post-translational excision of the intervening region (intein) followed by peptide ligation.

This chain is Iron-sulfur cluster assembly SufBD family protein ML0593, found in Mycobacterium leprae (strain TN).